Reading from the N-terminus, the 217-residue chain is Translation initiation factor 6 (217 aa).

The protein belongs to the eIF-6 family.

Its function is as follows. Binds to the 50S ribosomal subunit and prevents its association with the 30S ribosomal subunit to form the 70S initiation complex. The sequence is that of Translation initiation factor 6 from Methanococcoides burtonii (strain DSM 6242 / NBRC 107633 / OCM 468 / ACE-M).